A 360-amino-acid polypeptide reads, in one-letter code: GTPase Obg (360 aa).

In terms of domain architecture, Obg spans 1–156; that stretch reads MFVDSVEIII…KCVRLELKLI (156 aa). The OBG-type G domain occupies 157–360; the sequence is ADIGLVGFPN…LKFVLLEALP (204 aa). Residues 163 to 170, 188 to 192, 210 to 213, 279 to 282, and 341 to 343 each bind GTP; these read GFPNAGKS, FTTLV, DIPG, NKCD, and SAV. Ser-170 and Thr-190 together coordinate Mg(2+).

Belongs to the TRAFAC class OBG-HflX-like GTPase superfamily. OBG GTPase family. As to quaternary structure, monomer. Mg(2+) serves as cofactor.

It localises to the cytoplasm. Its function is as follows. An essential GTPase which binds GTP, GDP and possibly (p)ppGpp with moderate affinity, with high nucleotide exchange rates and a fairly low GTP hydrolysis rate. Plays a role in control of the cell cycle, stress response, ribosome biogenesis and in those bacteria that undergo differentiation, in morphogenesis control. The polypeptide is GTPase Obg (Helicobacter pylori (strain HPAG1)).